Consider the following 309-residue polypeptide: Phosphoserine phosphatase (309 aa).

The active-site Nucleophile is the Asp-97. Mg(2+)-binding residues include Asp-97 and Asp-99. Asp-99 functions as the Proton donor in the catalytic mechanism. Residues Glu-106, Arg-142, 186-187, and Lys-232 contribute to the substrate site; that span reads SG. Residue Asp-255 participates in Mg(2+) binding. A substrate-binding site is contributed by Asn-258.

This sequence belongs to the HAD-like hydrolase superfamily. SerB family. Requires Mg(2+) as cofactor.

It carries out the reaction O-phospho-L-serine + H2O = L-serine + phosphate. The catalysed reaction is O-phospho-D-serine + H2O = D-serine + phosphate. The protein operates within amino-acid biosynthesis; L-serine biosynthesis; L-serine from 3-phospho-D-glycerate: step 3/3. The polypeptide is Phosphoserine phosphatase (SER2) (Saccharomyces cerevisiae (strain ATCC 204508 / S288c) (Baker's yeast)).